Consider the following 299-residue polypeptide: Ribonuclease 3-like protein 3 (299 aa).

One can recognise an RNase III domain in the interval 39–183 (VAAVESLLGY…LIGAIYCDSN (145 aa)). Glu-79, Asp-169, and Glu-172 together coordinate Mg(2+). Residues 209 to 273 (HPVSELFEFC…AKAALDKLKE (65 aa)) enclose the DRBM domain. A disordered region spans residues 274-299 (TLGQSQTEPMSAEVSEQFNKIDLTGS). Over residues 275 to 291 (LGQSQTEPMSAEVSEQF) the composition is skewed to polar residues.

Mg(2+) is required as a cofactor. Requires Mn(2+) as cofactor.

Functionally, cleaves double-stranded RNA (dsRNA). In Oryza sativa subsp. japonica (Rice), this protein is Ribonuclease 3-like protein 3.